A 647-amino-acid polypeptide reads, in one-letter code: DNA ligase (647 aa).

NAD(+)-binding positions include 30-34 (DEEYD), 79-80 (SM), and E105. Residue K107 is the N6-AMP-lysine intermediate of the active site. NAD(+)-binding residues include R128, E162, and K301. 4 residues coordinate Zn(2+): C395, C398, C411, and C416. The 78-residue stretch at 570–647 (KSDGVIFGKT…ESAFNELVKE (78 aa)) folds into the BRCT domain.

This sequence belongs to the NAD-dependent DNA ligase family. LigA subfamily. Mg(2+) serves as cofactor. It depends on Mn(2+) as a cofactor.

The catalysed reaction is NAD(+) + (deoxyribonucleotide)n-3'-hydroxyl + 5'-phospho-(deoxyribonucleotide)m = (deoxyribonucleotide)n+m + AMP + beta-nicotinamide D-nucleotide.. DNA ligase that catalyzes the formation of phosphodiester linkages between 5'-phosphoryl and 3'-hydroxyl groups in double-stranded DNA using NAD as a coenzyme and as the energy source for the reaction. It is essential for DNA replication and repair of damaged DNA. This chain is DNA ligase, found in Campylobacter jejuni subsp. jejuni serotype O:6 (strain 81116 / NCTC 11828).